The chain runs to 256 residues: DNA repair protein RecO (256 aa).

Belongs to the RecO family.

In terms of biological role, involved in DNA repair and RecF pathway recombination. The polypeptide is DNA repair protein RecO (Pelotomaculum thermopropionicum (strain DSM 13744 / JCM 10971 / SI)).